The primary structure comprises 437 residues: Protein RecA (437 aa).

Residue 69-76 (GPESSGKT) coordinates ATP. Residues 343–437 (HDAAVRTSPD…GNGKSVKRKG (95 aa)) are disordered. Composition is skewed to polar residues over residues 350–371 (SPDT…SGSP), 380–391 (GAVNNSRDSTGG), and 400–426 (LNLS…NQKP).

Belongs to the RecA family.

The protein resides in the cytoplasm. Its function is as follows. Can catalyze the hydrolysis of ATP in the presence of single-stranded DNA, the ATP-dependent uptake of single-stranded DNA by duplex DNA, and the ATP-dependent hybridization of homologous single-stranded DNAs. It interacts with LexA causing its activation and leading to its autocatalytic cleavage. This Tropheryma whipplei (strain Twist) (Whipple's bacillus) protein is Protein RecA.